A 1609-amino-acid polypeptide reads, in one-letter code: Probable outer membrane protein pmp21 (1609 aa).

A signal peptide spans 1–30; sequence MVAKKTVRSYRSSFSHSVIVAILSAGIAFE. A compositionally biased stretch (polar residues) spans 132–145; it reads FSQPTQEPDTSNAV. Disordered stretches follow at residues 132-183 and 640-677; these read FSQP…KSPE and TAPV…EVPP. Basic and acidic residues-rich tracts occupy residues 149–175 and 651–672; these read ISSD…KEVS and NKDE…KTVE. The region spanning 1328-1609 is the Autotransporter domain; it reads ELDFSTNVWG…DFNGGIRIIF (282 aa).

The protein belongs to the PMP outer membrane protein family.

It localises to the secreted. The protein localises to the cell wall. The protein resides in the cell outer membrane. This chain is Probable outer membrane protein pmp21 (pmp21), found in Chlamydia pneumoniae (Chlamydophila pneumoniae).